Reading from the N-terminus, the 1063-residue chain is Coiled-coil domain-containing protein 187 (1063 aa).

Disordered stretches follow at residues 1–41 (MPTL…AADW), 62–184 (RWPG…SRLH), 219–278 (RVEA…KDED), 300–319 (PPPVLRRHHSKDPSRDPALT), 392–484 (RKGG…ERLG), 496–539 (GQAC…ATQP), and 551–658 (WEDP…LEEK). Residues 111-124 (SSVSSGRLSCSSGG) are compositionally biased toward low complexity. The segment covering 146 to 160 (RKSDARLEQLRDKIR) has biased composition (basic and acidic residues). Residues 163–181 (AWQQGSCASLGTSAPSSAS) show a composition bias toward polar residues. A compositionally biased stretch (basic and acidic residues) spans 219–233 (RVEAKASHGQGRELS). Composition is skewed to basic and acidic residues over residues 431-442 (TERKHSSLERAR) and 472-484 (SFQRPESPHERLG). Residues 508–517 (QRQGPSSQRP) are compositionally biased toward low complexity. A coiled-coil region spans residues 816–851 (HLRHKQAQLQALETTAKVLKQRVDSLTAKLQGAEAL). Positions 1010 to 1030 (PRSCGKGDPADRPWAGWSGGR) are disordered.

This is Coiled-coil domain-containing protein 187 from Homo sapiens (Human).